We begin with the raw amino-acid sequence, 140 residues long: L-fucose mutarotase (140 aa).

The active-site Proton donor is H22. Substrate contacts are provided by residues D30, R107, and 129 to 131 (YGN).

The protein belongs to the RbsD / FucU family. FucU mutarotase subfamily. Homodecamer.

It localises to the cytoplasm. The catalysed reaction is alpha-L-fucose = beta-L-fucose. It participates in carbohydrate metabolism; L-fucose metabolism. In terms of biological role, involved in the anomeric conversion of L-fucose. This is L-fucose mutarotase from Citrobacter koseri (strain ATCC BAA-895 / CDC 4225-83 / SGSC4696).